Consider the following 571-residue polypeptide: MTLNGWMQIALYGAVVLALVRPLGGYMTRVFNGERTLLSPALAPIERGLYRISGIDARQEQTWLAYAGAMILFNVAGFVLLYALLRLQALLPFNPADQAAVAPDLAFNTATSFVTNTNWQSYGGETTLSYLSQMLGLTHQNFVSAASGMAVAVALIRGFARASTKTLGSFWVDMTRATLYVLLPLSTVLALFYVSQGMPQTLSPYVEATTLEGAKQTIAVGPVASQVAIKMLGTNGGGFFNANAAHPFENPTALSNFLQMLSIFVIGAALTNVFGRMVGDERQGWAILAAMGLLFLAGVTVTYWAEANAHGVLSNLGLTGGNMEGKEVRFGIAASALFAVITTAASCGAVNAMHDSFTALGGLIPLLNMQLGEVIIGGVGAGLYGMLVFVVVAIFVAGLMVGRTPEYLGKKIEAREVKMAMLGILCLPLMMLGFTAIATVVPAGLAGPANAGPHGFSEILYAYTSAAANNGSAFGGLTANTLFYNTTLAIGMLVGRFFVKIPVLAIAGSLAAKKRLPASAGTFPTHGGLFVGLLVGVVLIIGGLTFFPALALGPVVEHFAGAAGQTFATGG.

The next 12 membrane-spanning stretches (helical) occupy residues 5-25 (GWMQ…PLGG), 64-84 (LAYA…LYAL), 136-156 (GLTH…VALI), 179-199 (LYVL…QGMP), 220-240 (VGPV…GGFF), 254-274 (LSNF…TNVF), 285-305 (WAIL…TYWA), 330-350 (FGIA…CGAV), 375-395 (IIGG…VAIF), 421-441 (MLGI…ATVV), 488-508 (LAIG…AIAG), and 527-547 (GGLF…LTFF).

This sequence belongs to the KdpA family. The system is composed of three essential subunits: KdpA, KdpB and KdpC.

The protein resides in the cell inner membrane. Functionally, part of the high-affinity ATP-driven potassium transport (or Kdp) system, which catalyzes the hydrolysis of ATP coupled with the electrogenic transport of potassium into the cytoplasm. This subunit binds the periplasmic potassium ions and delivers the ions to the membrane domain of KdpB through an intramembrane tunnel. The polypeptide is Potassium-transporting ATPase potassium-binding subunit (Methylorubrum extorquens (strain CM4 / NCIMB 13688) (Methylobacterium extorquens)).